Reading from the N-terminus, the 156-residue chain is Small ribosomal subunit protein uS7 (156 aa).

Belongs to the universal ribosomal protein uS7 family. As to quaternary structure, part of the 30S ribosomal subunit. Contacts proteins S9 and S11.

In terms of biological role, one of the primary rRNA binding proteins, it binds directly to 16S rRNA where it nucleates assembly of the head domain of the 30S subunit. Is located at the subunit interface close to the decoding center, probably blocks exit of the E-site tRNA. The chain is Small ribosomal subunit protein uS7 from Photorhabdus laumondii subsp. laumondii (strain DSM 15139 / CIP 105565 / TT01) (Photorhabdus luminescens subsp. laumondii).